Reading from the N-terminus, the 321-residue chain is Annexin D3 (321 aa).

Residue Ala-2 is modified to N-acetylalanine. Annexin repeat units lie at residues 11-82 (PSPA…SWTY), 83-159 (DPAE…TLAS), 171-243 (EVAT…VAIF), and 247-318 (TPEK…TLLG). Ca(2+) is bound by residues Gly-26, Gly-28, and Glu-68. Thr-117 carries the phosphothreonine modification. Ile-260 and Gly-264 together coordinate Ca(2+). Tyr-289 carries the phosphotyrosine modification. Asp-304 contacts Ca(2+).

Belongs to the annexin (TC 1.A.31.1) family. As to expression, expressed mainly in roots and flowers. Lower in stems and leaves.

The sequence is that of Annexin D3 (ANN3) from Arabidopsis thaliana (Mouse-ear cress).